A 129-amino-acid chain; its full sequence is Small ribosomal subunit protein uS11 (129 aa).

This sequence belongs to the universal ribosomal protein uS11 family. As to quaternary structure, part of the 30S ribosomal subunit. Interacts with proteins S7 and S18. Binds to IF-3.

In terms of biological role, located on the platform of the 30S subunit, it bridges several disparate RNA helices of the 16S rRNA. Forms part of the Shine-Dalgarno cleft in the 70S ribosome. This chain is Small ribosomal subunit protein uS11, found in Colwellia psychrerythraea (strain 34H / ATCC BAA-681) (Vibrio psychroerythus).